The primary structure comprises 55 residues: U17-myrmicitoxin-Mri1b (55 aa).

The N-terminal stretch at 1-31 is a signal peptide; it reads MENSRTSTFTAYVTVAFLLISTFVTMVVTES. Position 32 is a pyrrolidone carboxylic acid (Gln32).

Contains 1 disulfide bond. In terms of tissue distribution, expressed by the venom gland.

Its subcellular location is the secreted. This is U17-myrmicitoxin-Mri1b from Manica rubida (European giant red ant).